Reading from the N-terminus, the 318-residue chain is NADH-ubiquinone oxidoreductase chain 1 (318 aa).

The next 8 membrane-spanning stretches (helical) occupy residues Pro2–Leu22, Ala69–Leu89, Leu100–Gly120, Ala147–Thr167, His171–Ala191, Leu222–Phe242, Glu253–Ile273, and Leu294–Ile314.

This sequence belongs to the complex I subunit 1 family. As to quaternary structure, core subunit of respiratory chain NADH dehydrogenase (Complex I) which is composed of 45 different subunits.

It is found in the mitochondrion inner membrane. The catalysed reaction is a ubiquinone + NADH + 5 H(+)(in) = a ubiquinol + NAD(+) + 4 H(+)(out). In terms of biological role, core subunit of the mitochondrial membrane respiratory chain NADH dehydrogenase (Complex I) which catalyzes electron transfer from NADH through the respiratory chain, using ubiquinone as an electron acceptor. Essential for the catalytic activity and assembly of complex I. This Hylobates lar (Lar gibbon) protein is NADH-ubiquinone oxidoreductase chain 1 (MT-ND1).